A 474-amino-acid chain; its full sequence is 3-isopropylmalate dehydratase large subunit (474 aa).

[4Fe-4S] cluster is bound by residues C352, C413, and C416.

The protein belongs to the aconitase/IPM isomerase family. LeuC type 1 subfamily. As to quaternary structure, heterodimer of LeuC and LeuD. [4Fe-4S] cluster serves as cofactor.

It catalyses the reaction (2R,3S)-3-isopropylmalate = (2S)-2-isopropylmalate. It functions in the pathway amino-acid biosynthesis; L-leucine biosynthesis; L-leucine from 3-methyl-2-oxobutanoate: step 2/4. Its function is as follows. Catalyzes the isomerization between 2-isopropylmalate and 3-isopropylmalate, via the formation of 2-isopropylmaleate. The chain is 3-isopropylmalate dehydratase large subunit from Pseudomonas savastanoi pv. phaseolicola (strain 1448A / Race 6) (Pseudomonas syringae pv. phaseolicola (strain 1448A / Race 6)).